We begin with the raw amino-acid sequence, 342 residues long: S-adenosylmethionine:tRNA ribosyltransferase-isomerase (342 aa).

The protein belongs to the QueA family. As to quaternary structure, monomer.

It is found in the cytoplasm. It carries out the reaction 7-aminomethyl-7-carbaguanosine(34) in tRNA + S-adenosyl-L-methionine = epoxyqueuosine(34) in tRNA + adenine + L-methionine + 2 H(+). It participates in tRNA modification; tRNA-queuosine biosynthesis. Its function is as follows. Transfers and isomerizes the ribose moiety from AdoMet to the 7-aminomethyl group of 7-deazaguanine (preQ1-tRNA) to give epoxyqueuosine (oQ-tRNA). The chain is S-adenosylmethionine:tRNA ribosyltransferase-isomerase from Bacillus licheniformis (strain ATCC 14580 / DSM 13 / JCM 2505 / CCUG 7422 / NBRC 12200 / NCIMB 9375 / NCTC 10341 / NRRL NRS-1264 / Gibson 46).